The sequence spans 222 residues: Inositol diphosphatase DSP1 (222 aa).

Residues 1 to 14 are compositionally biased toward polar residues; it reads MRQEATCSLVLTQD. The tract at residues 1–41 is disordered; sequence MRQEATCSLVLTQDAQHRKNQPPLAEEDDDRDHTDDAMPPP. The 155-residue stretch at 68–222 folds into the Tyrosine-protein phosphatase domain; that stretch reads NFAMVDHGVY…LKHLPASFSC (155 aa). Residues 124-136 are WPD loop important for active site topology; that stretch reads FGIDGSKEPFVNI. 1D-myo-inositol hexakisphosphate is bound by residues asparagine 135, isoleucine 136, and arginine 140. The active-site Phosphocysteine intermediate is the cysteine 160.

The protein belongs to the protein-tyrosine phosphatase family. Atypical dual-specificity phosphatase Siw14-like subfamily.

It is found in the nucleus. The protein localises to the cytoplasm. The catalysed reaction is 5-diphospho-1D-myo-inositol 1,2,3,4,6-pentakisphosphate + H2O = 1D-myo-inositol hexakisphosphate + phosphate + H(+). The enzyme catalyses 1,5-bis(diphospho)-1D-myo-inositol 2,3,4,6-tetrakisphosphate + H2O = 1-diphospho-1D-myo-inositol 2,3,4,5,6-pentakisphosphate + phosphate + 2 H(+). It catalyses the reaction 3,5-bis(diphospho)-1D-myo-inositol 1,2,4,6-tetrakisphosphate + H2O = 3-diphospho-1D-myo-inositol 1,2,4,5,6-pentakisphosphate + phosphate + 2 H(+). It carries out the reaction 6-diphospho-1D-myo-inositol pentakisphosphate + H2O = 1D-myo-inositol hexakisphosphate + phosphate + H(+). Cleaves the beta-phosphate at the 5-position of soluble inositol pyrophosphates. Has highest activity on 5-diphosphoinositol 1,2,3,4,6-pentakisphosphate (5-InsP(7)). Possesses phosphotyrosine phosphatase activity in vitro. May contribute to regulation of drought stress responses. The protein is Inositol diphosphatase DSP1 of Oryza sativa subsp. japonica (Rice).